The primary structure comprises 466 residues: 3-isopropylmalate dehydratase large subunit (466 aa).

[4Fe-4S] cluster is bound by residues Cys-347, Cys-407, and Cys-410.

Belongs to the aconitase/IPM isomerase family. LeuC type 1 subfamily. Heterodimer of LeuC and LeuD. It depends on [4Fe-4S] cluster as a cofactor.

It carries out the reaction (2R,3S)-3-isopropylmalate = (2S)-2-isopropylmalate. It functions in the pathway amino-acid biosynthesis; L-leucine biosynthesis; L-leucine from 3-methyl-2-oxobutanoate: step 2/4. In terms of biological role, catalyzes the isomerization between 2-isopropylmalate and 3-isopropylmalate, via the formation of 2-isopropylmaleate. This chain is 3-isopropylmalate dehydratase large subunit, found in Blochmanniella pennsylvanica (strain BPEN).